Here is a 124-residue protein sequence, read N- to C-terminus: Snaclec rhodocetin subunit delta (124 aa).

3 cysteine pairs are disulfide-bonded: Cys-1–Cys-12, Cys-29–Cys-120, and Cys-95–Cys-112. In terms of domain architecture, C-type lectin spans 8–121; the sequence is YNGYCYRVFS…CEKTVSFVCK (114 aa).

The protein belongs to the snaclec family. In terms of assembly, heterotetramer of subunit alpha, beta, gamma and delta; only the gamma and the delta subunits are disulfide-linked. Alpha-beta heterodimer and gamma-delta heterodimer associate orthogonally, giving a cruciform conformation. This heterotetramer may covalently dimerizes thanks to the gamma subunit. In terms of tissue distribution, expressed by the venom gland.

The protein resides in the secreted. Its function is as follows. Potent inhibitor of collagen-induced platelet aggregation. It acts by binding to the integrin alpha2A domain and blocks collagen binding to integrin alpha-2/beta-1 (ITGA2/ITGB1). The gamma/delta subunits mainly contribute to this activity. The polypeptide is Snaclec rhodocetin subunit delta (Calloselasma rhodostoma (Malayan pit viper)).